The chain runs to 41 residues: Large ribosomal subunit protein bL36 (41 aa).

This sequence belongs to the bacterial ribosomal protein bL36 family.

The sequence is that of Large ribosomal subunit protein bL36 from Phenylobacterium zucineum (strain HLK1).